The primary structure comprises 279 residues: Proteasome subunit beta (279 aa).

Residues 1–51 (MTFDASGRLPEAFLTPGGSSFMDFLAGHAPDLLPGRRSLGTGDLSKDVPHG) constitute a propeptide, removed in mature form; by autocatalysis. Thr52 serves as the catalytic Nucleophile.

This sequence belongs to the peptidase T1B family. The 20S proteasome core is composed of 14 alpha and 14 beta subunits that assemble into four stacked heptameric rings, resulting in a barrel-shaped structure. The two inner rings, each composed of seven catalytic beta subunits, are sandwiched by two outer rings, each composed of seven alpha subunits. The catalytic chamber with the active sites is on the inside of the barrel. Has a gated structure, the ends of the cylinder being occluded by the N-termini of the alpha-subunits. Is capped by the proteasome-associated ATPase, ARC.

It is found in the cytoplasm. It catalyses the reaction Cleavage of peptide bonds with very broad specificity.. It participates in protein degradation; proteasomal Pup-dependent pathway. Its activity is regulated as follows. The formation of the proteasomal ATPase ARC-20S proteasome complex, likely via the docking of the C-termini of ARC into the intersubunit pockets in the alpha-rings, may trigger opening of the gate for substrate entry. Interconversion between the open-gate and close-gate conformations leads to a dynamic regulation of the 20S proteasome proteolysis activity. Functionally, component of the proteasome core, a large protease complex with broad specificity involved in protein degradation. This chain is Proteasome subunit beta, found in Kribbella flavida (strain DSM 17836 / JCM 10339 / NBRC 14399).